The sequence spans 414 residues: Gamma-glutamyl phosphate reductase (414 aa).

The protein belongs to the gamma-glutamyl phosphate reductase family.

The protein localises to the cytoplasm. It catalyses the reaction L-glutamate 5-semialdehyde + phosphate + NADP(+) = L-glutamyl 5-phosphate + NADPH + H(+). It functions in the pathway amino-acid biosynthesis; L-proline biosynthesis; L-glutamate 5-semialdehyde from L-glutamate: step 2/2. Its function is as follows. Catalyzes the NADPH-dependent reduction of L-glutamate 5-phosphate into L-glutamate 5-semialdehyde and phosphate. The product spontaneously undergoes cyclization to form 1-pyrroline-5-carboxylate. In Caldanaerobacter subterraneus subsp. tengcongensis (strain DSM 15242 / JCM 11007 / NBRC 100824 / MB4) (Thermoanaerobacter tengcongensis), this protein is Gamma-glutamyl phosphate reductase.